A 236-amino-acid polypeptide reads, in one-letter code: uncharacterized protein (236 aa).

The region spanning 4–225 (LLEASIEQAG…TGLEGQSLLD (222 aa)) is the ABC transporter domain. 38–45 (GANGAGKS) contributes to the ATP binding site.

Belongs to the ABC transporter superfamily.

This is an uncharacterized protein from Bacillus subtilis (strain 168).